The following is a 318-amino-acid chain: MPSYGSLHSPSLRKMEHSRGQYGGGRKGMSLGNVIGDPFALATISIAGLAWLIAFIASIVAQIQTTQGFPTYTWWTVVFYFFLIPGVFVVVASDTIQTYHVALVGYMACGLVLTTSSVNGLVYSTNGAKEAAAAGFILLSMVTIVWIFYFGSAPSAMPRAYLDSFALSKESTSNNRQTMTGGGYGIGRPETSTSVQPPQMYTSAQLNGFENPSPVNGMRNSGAPPSGFPTTPGPASGLPKTTTPPAGGAADAEIVPPTEYPYRAKAIYTYEANPDDANEISFSKHEILEVSDVSGRWWQARKETGETGIAPSNYLILL.

Residues M1–G23 form a disordered region. At M1–P38 the chain is on the cytoplasmic side. A helical membrane pass occupies residues F39 to I59. Residues V60–T71 are Extracellular-facing. A helical membrane pass occupies residues Y72–A92. The Cytoplasmic segment spans residues S93–H100. Residues V101 to L121 form a helical membrane-spanning segment. The Extracellular portion of the chain corresponds to V122–E130. Residues A131–G151 form a helical membrane-spanning segment. Residues S152 to L318 lie on the Cytoplasmic side of the membrane. A disordered region spans residues T172–V255. Polar residues predominate over residues E190 to P214. Residues G237–A250 are compositionally biased toward low complexity. Residues E259 to L318 form the SH3 domain.

It belongs to the SHO1 family. Forms homooligomers.

The protein localises to the cell membrane. MSB2 and SHO1 have overlapping functions in recognizing various surface signals for MAPK PMK1 activation and appressorium formation. While MSB2 is critical for sensing surface hydrophobicity and cutin monomers, SHO1 may play a more important role in recognizing rice leaf waxes. The protein is Cell surface sensor SHO1 of Pyricularia oryzae (strain 70-15 / ATCC MYA-4617 / FGSC 8958) (Rice blast fungus).